The sequence spans 955 residues: Protein translocase subunit SecA (955 aa).

Residues Gln90, 108 to 112, and Asp509 each bind ATP; that span reads GEGKT. The interval 537–571 is disordered; the sequence is EGHRPPVPLQRSGAEGGGGFAAKAAPASGPHGHAP. Residues 557-571 show a composition bias toward low complexity; the sequence is AAKAAPASGPHGHAP.

This sequence belongs to the SecA family. In terms of assembly, monomer and homodimer. Part of the essential Sec protein translocation apparatus which comprises SecA, SecYEG and auxiliary proteins SecDF. Other proteins may also be involved.

It is found in the cell inner membrane. It localises to the cellular thylakoid membrane. The protein resides in the cytoplasm. The catalysed reaction is ATP + H2O + cellular proteinSide 1 = ADP + phosphate + cellular proteinSide 2.. Part of the Sec protein translocase complex. Interacts with the SecYEG preprotein conducting channel. Has a central role in coupling the hydrolysis of ATP to the transfer of proteins into and across the cell membrane, serving as an ATP-driven molecular motor driving the stepwise translocation of polypeptide chains across the membrane. In terms of biological role, probably participates in protein translocation into and across both the cytoplasmic and thylakoid membranes in cyanobacterial cells. This Synechococcus sp. (strain WH7803) protein is Protein translocase subunit SecA.